We begin with the raw amino-acid sequence, 445 residues long: Glutamyl-tRNA(Gln) amidotransferase subunit D (445 aa).

Residues 93-425 (SEIKIISTGG…EKIRSLMISN (333 aa)) enclose the Asparaginase/glutaminase domain. Catalysis depends on residues T103, T179, D180, and K258.

Belongs to the asparaginase 1 family. GatD subfamily. Heterodimer of GatD and GatE.

The enzyme catalyses L-glutamyl-tRNA(Gln) + L-glutamine + ATP + H2O = L-glutaminyl-tRNA(Gln) + L-glutamate + ADP + phosphate + H(+). Allows the formation of correctly charged Gln-tRNA(Gln) through the transamidation of misacylated Glu-tRNA(Gln) in organisms which lack glutaminyl-tRNA synthetase. The reaction takes place in the presence of glutamine and ATP through an activated gamma-phospho-Glu-tRNA(Gln). The GatDE system is specific for glutamate and does not act on aspartate. The sequence is that of Glutamyl-tRNA(Gln) amidotransferase subunit D from Saccharolobus islandicus (strain M.16.27) (Sulfolobus islandicus).